The sequence spans 88 residues: Small ribosomal subunit protein uS17 (88 aa).

This sequence belongs to the universal ribosomal protein uS17 family. In terms of assembly, part of the 30S ribosomal subunit.

In terms of biological role, one of the primary rRNA binding proteins, it binds specifically to the 5'-end of 16S ribosomal RNA. This Synechococcus sp. (strain WH7803) protein is Small ribosomal subunit protein uS17.